We begin with the raw amino-acid sequence, 165 residues long: Choriogonadotropin subunit beta 7 (165 aa).

Residues Met-1–Ala-20 form the signal peptide. 6 cysteine pairs are disulfide-bonded: Cys-29-Cys-77, Cys-43-Cys-92, Cys-46-Cys-130, Cys-54-Cys-108, Cys-58-Cys-110, and Cys-113-Cys-120. Residues Asn-33 and Asn-50 are each glycosylated (N-linked (GlcNAc...) asparagine). The segment at Asp-131–Gln-165 is disordered. O-linked (GalNAc...) serine glycosylation is found at Ser-141, Ser-147, Ser-152, and Ser-158. A compositionally biased stretch (pro residues) spans Ala-143–Leu-154.

It belongs to the glycoprotein hormones subunit beta family. As to quaternary structure, heterodimer of a common alpha chain identical in LH, FSH, TSH and HCG and a unique beta chain distinct in each of the hormones and confers receptor and biological specificity. In terms of tissue distribution, high expression in the placenta throughout pregnancy.

The protein localises to the secreted. In terms of biological role, beta subunit of the human chorionic gonadotropin (hCG). hCG is a complex glycoprotein composed of two glycosylated subunits alpha and beta which are non-covalently associated. The alpha subunit is identical to those in the pituitary gonadotropin hormones (LH, FSH and TSH). The beta subunits are distinct in each of the hormones and confer receptor and biological specificity. Has an essential role for pregnancy and maternal adaptation. Stimulates the ovaries to synthesize the steroids that are essential for the maintenance of pregnancy. The polypeptide is Choriogonadotropin subunit beta 7 (Homo sapiens (Human)).